A 145-amino-acid polypeptide reads, in one-letter code: Ribosome-binding factor A (145 aa).

The interval 126–145 (RDLDTETDAEAGSETTKEED) is disordered. Acidic residues predominate over residues 130 to 145 (TETDAEAGSETTKEED).

Belongs to the RbfA family. Monomer. Binds 30S ribosomal subunits, but not 50S ribosomal subunits or 70S ribosomes.

The protein localises to the cytoplasm. Functionally, one of several proteins that assist in the late maturation steps of the functional core of the 30S ribosomal subunit. Associates with free 30S ribosomal subunits (but not with 30S subunits that are part of 70S ribosomes or polysomes). Required for efficient processing of 16S rRNA. May interact with the 5'-terminal helix region of 16S rRNA. This is Ribosome-binding factor A from Azorhizobium caulinodans (strain ATCC 43989 / DSM 5975 / JCM 20966 / LMG 6465 / NBRC 14845 / NCIMB 13405 / ORS 571).